The sequence spans 400 residues: Acetate kinase (400 aa).

Position 10 (N10) interacts with Mg(2+). Residue K17 coordinates ATP. R91 contributes to the substrate binding site. D150 functions as the Proton donor/acceptor in the catalytic mechanism. Residues 210-214 (HLGNG), 285-287 (DCR), and 333-337 (GIGEN) each bind ATP. Residue E387 participates in Mg(2+) binding.

The protein belongs to the acetokinase family. In terms of assembly, homodimer. Mg(2+) is required as a cofactor. Requires Mn(2+) as cofactor.

The protein localises to the cytoplasm. It catalyses the reaction acetate + ATP = acetyl phosphate + ADP. It functions in the pathway metabolic intermediate biosynthesis; acetyl-CoA biosynthesis; acetyl-CoA from acetate: step 1/2. Functionally, catalyzes the formation of acetyl phosphate from acetate and ATP. Can also catalyze the reverse reaction. This is Acetate kinase from Erwinia tasmaniensis (strain DSM 17950 / CFBP 7177 / CIP 109463 / NCPPB 4357 / Et1/99).